Consider the following 359-residue polypeptide: Peptide chain release factor 1 (359 aa).

An N5-methylglutamine modification is found at Gln-235.

It belongs to the prokaryotic/mitochondrial release factor family. In terms of processing, methylated by PrmC. Methylation increases the termination efficiency of RF1.

The protein localises to the cytoplasm. Its function is as follows. Peptide chain release factor 1 directs the termination of translation in response to the peptide chain termination codons UAG and UAA. This chain is Peptide chain release factor 1, found in Ehrlichia ruminantium (strain Gardel).